Consider the following 370-residue polypeptide: TD and POZ domain-containing protein 4 (370 aa).

One can recognise an MATH domain in the interval 19-149; sequence KLCYRWTISN…DDKFTLLCKV (131 aa). Residues 188–251 form the BTB domain; it reads TDCSLLVAGH…MMGFIYTGKV (64 aa).

The protein belongs to the Tdpoz family.

The sequence is that of TD and POZ domain-containing protein 4 from Mus musculus (Mouse).